The sequence spans 269 residues: MDGVNDAANHTVESVPGRPSTASAPLEAGRRSPTGSRLYPRVTSFRSRRGALTPNQQGAWDRMWPRIGREVGDEPLDADAWFGRQAPLVIEIGCGTGTATAAMAAAEPHVNLIGIEVYQPGLAQLVQRIERDGIDNIRLLRGDAVDVLEHMIAAESLTGVRVFFPDPWPKARHHKRRLLQPATVALIAGRLRPGGVLHVATDHAGYAEHIAAVGAAEPLLVGLNEATGGDDERARTLAPIGLDRPVTKFEDKAHRAGSAITEFVWGKIE.

A disordered region spans residues 1–38 (MDGVNDAANHTVESVPGRPSTASAPLEAGRRSPTGSRL). 4 residues coordinate S-adenosyl-L-methionine: glutamate 91, glutamate 116, aspartate 143, and aspartate 166. Residue aspartate 166 is part of the active site. Substrate is bound by residues lysine 170, aspartate 202, and 247–250 (TKFE).

Belongs to the class I-like SAM-binding methyltransferase superfamily. TrmB family.

It carries out the reaction guanosine(46) in tRNA + S-adenosyl-L-methionine = N(7)-methylguanosine(46) in tRNA + S-adenosyl-L-homocysteine. It participates in tRNA modification; N(7)-methylguanine-tRNA biosynthesis. Its function is as follows. Catalyzes the formation of N(7)-methylguanine at position 46 (m7G46) in tRNA. The protein is tRNA (guanine-N(7)-)-methyltransferase of Nocardia farcinica (strain IFM 10152).